Consider the following 590-residue polypeptide: Negative elongation factor C/D (590 aa).

Positions 16–43 (GSAAEWGDEADGGQQEDDSGEGEDDAEV) are disordered. Residues 21–43 (WGDEADGGQQEDDSGEGEDDAEV) show a composition bias toward acidic residues.

Belongs to the NELF-D family. As to quaternary structure, the NELF complex is composed of NELFA, NELFB, NELFCD (isoform NELF-C or isoform NELF-D) and NELFE; NELFA and NELFCD form a stable subcomplex that binds primarily through NELFCD to the N-terminus of NELFB. Binds RNA which may help to stabilize the NELF complex on nucleic acid. In vitro, the NELFA:NELFCD subcomplex binds to ssDNA and ssRNA in a sequence- and structure-dependent manner. Interacts with ARAF. Interacts with PCF11. Interacts with KAT8. As to expression, widely expressed. Expressed in heart, brain, lung, placenta, liver, skeletal and cardiac muscle, adrenal, thyroid, kidney and pancreas.

The protein localises to the nucleus. In terms of biological role, essential component of the NELF complex, a complex that negatively regulates the elongation of transcription by RNA polymerase II. The NELF complex, which acts via an association with the DSIF complex and causes transcriptional pausing, is counteracted by the P-TEFb kinase complex. (Microbial infection) The NELF complex is involved in HIV-1 latency possibly involving recruitment of PCF11 to paused RNA polymerase II. In Homo sapiens (Human), this protein is Negative elongation factor C/D (NELFCD).